We begin with the raw amino-acid sequence, 285 residues long: 1-acyl-sn-glycerol-3-phosphate acyltransferase alpha (285 aa).

Residues 1 to 28 (MELWPGAWTALLLLLLLLLSTLWFCSSS) form the signal peptide. The Lumenal portion of the chain corresponds to 29–34 (AKYFFK). A helical membrane pass occupies residues 35 to 55 (MAFYNGWILFLAILAIPVCAV). Residues 56-124 (RGRNVENMKI…PDRCVPIAKR (69 aa)) lie on the Cytoplasmic side of the membrane. An HXXXXD motif motif is present at residues 101–106 (HQSSLD). The helical transmembrane segment at 125–145 (ELLWAGSAGLACWLAGIIFID) threads the bilayer. Topologically, residues 146-189 (RKRTGDAISVMSEVAQTLLTQDVRVWVFPEGTRNHNGSMLPFKR) are lumenal. The EGTR motif motif lies at 175–178 (EGTR).

Belongs to the 1-acyl-sn-glycerol-3-phosphate acyltransferase family. In terms of tissue distribution, widely expressed.

It localises to the endoplasmic reticulum membrane. It catalyses the reaction a 1-acyl-sn-glycero-3-phosphate + an acyl-CoA = a 1,2-diacyl-sn-glycero-3-phosphate + CoA. It carries out the reaction 1-(9Z-octadecenoyl)-sn-glycero-3-phosphate + (9Z)-octadecenoyl-CoA = 1,2-di-(9Z-octadecenoyl)-sn-glycero-3-phosphate + CoA. The catalysed reaction is 1-(9Z-octadecenoyl)-sn-glycero-3-phosphate + hexadecanoyl-CoA = 1-(9Z)-octadecenoyl-2-hexadecanoyl-sn-glycero-3-phosphate + CoA. The enzyme catalyses heptadecanoyl-CoA + 1-(9Z-octadecenoyl)-sn-glycero-3-phosphate = 1-(9Z)-octadecenoyl-2-heptadecanoyl-sn-glycero-3-phosphate + CoA. It catalyses the reaction 1-(9Z-octadecenoyl)-sn-glycero-3-phosphate + octadecanoyl-CoA = 1-(9Z-octadecenoyl)-2-octadecanoyl-sn-glycero-3-phosphate + CoA. It carries out the reaction 1-(9Z-octadecenoyl)-sn-glycero-3-phosphate + (9Z,12Z)-octadecadienoyl-CoA = 1-(9Z)-octadecenoyl-2-(9Z,12Z)-octadecadienoyl-sn-glycero-3-phosphate + CoA. The catalysed reaction is 1-(9Z-octadecenoyl)-sn-glycero-3-phosphate + tetradecanoyl-CoA = 1-(9Z)-octadecenoyl-2-tetradecanoyl-sn-glycero-3-phosphate + CoA. The enzyme catalyses pentadecanoyl-CoA + 1-(9Z-octadecenoyl)-sn-glycero-3-phosphate = 1-(9Z)-octadecenoyl-2-pentadecanoyl-sn-glycero-3-phosphate + CoA. It catalyses the reaction 1-hexadecanoyl-sn-glycero-3-phosphate + (9Z)-octadecenoyl-CoA = 1-hexadecanoyl-2-(9Z-octadecenoyl)-sn-glycero-3-phosphate + CoA. It carries out the reaction 1-(9Z,12Z,15Z)-octadecatrienoyl-sn-glycero-3-phosphate + (9Z)-octadecenoyl-CoA = 1-(9Z,12Z,15Z)-octadecatrienoyl-2-(9Z)-octadecenoyl-sn-glycero-3-phosphate + CoA. The catalysed reaction is 1-(6Z,9Z,12Z-octadecatrienoyl)-sn-glycero-3-phosphate + (9Z)-octadecenoyl-CoA = (6Z,9Z,12Z)-octadecatrienoyl-2-(9Z)-octadecenoyl-sn-glycero-3-phosphate + CoA. The enzyme catalyses 1-eicosanoyl-sn-glycero-3-phosphate + (9Z)-octadecenoyl-CoA = 1-eicosanoyl-2-(9Z)-octadecenoyl-sn-glycero-3-phosphate + CoA. It catalyses the reaction 1-tetradecanoyl-sn-glycerol 3-phosphate + (9Z)-octadecenoyl-CoA = 1-tetradecanoyl-2-(9Z)-octadecenoyl-sn-glycero-3-phosphate + CoA. It carries out the reaction 1-(9Z-octadecenoyl)-sn-glycero-3-phosphate + (5Z,8Z,11Z,14Z)-eicosatetraenoyl-CoA = 1-(9Z)-octadecenoyl-2-(5Z,8Z,11Z,14Z)-eicosatetraenoyl-sn-glycero-3-phosphate + CoA. The catalysed reaction is 1-(9Z-octadecenoyl)-sn-glycero-3-phosphate + dodecanoyl-CoA = 1-(9Z)-octadecenoyl-2-dodecanoyl-sn-glycero-3-phosphate + CoA. The enzyme catalyses (6Z)-octadecenoyl-CoA + 1-(9Z-octadecenoyl)-sn-glycero-3-phosphate = 1-(9Z)-octadecenoyl-2-(6Z)-octadecenoyl-sn-glycero-3-phosphate + CoA. It catalyses the reaction (11Z)-octadecenoyl-CoA + 1-(9Z-octadecenoyl)-sn-glycero-3-phosphate = 1-(9Z)-octadecenoyl-2-(11Z)-octadecenoyl-sn-glycero-3-phosphate + CoA. It carries out the reaction (9Z)-hexadecenoyl-CoA + 1-(9Z-octadecenoyl)-sn-glycero-3-phosphate = 1-(9Z-octadecenoyl)-2-(9Z-hexadecenoyl)-sn-glycero-3-phosphate + CoA. The protein operates within phospholipid metabolism; CDP-diacylglycerol biosynthesis; CDP-diacylglycerol from sn-glycerol 3-phosphate: step 2/3. Its function is as follows. Converts 1-acyl-sn-glycerol-3-phosphate (lysophosphatidic acid or LPA) into 1,2-diacyl-sn-glycerol-3-phosphate (phosphatidic acid or PA) by incorporating an acyl moiety at the sn-2 position of the glycerol backbone. In Mus musculus (Mouse), this protein is 1-acyl-sn-glycerol-3-phosphate acyltransferase alpha (Agpat1).